A 281-amino-acid chain; its full sequence is Pantothenate synthetase (281 aa).

Residue 30–37 (MGYLHEGH) coordinates ATP. H37 serves as the catalytic Proton donor. Q61 contributes to the (R)-pantoate binding site. Residue Q61 coordinates beta-alanine. 147–150 (GEKD) contacts ATP. Residue Q153 coordinates (R)-pantoate. ATP-binding positions include I176 and 184–187 (KSSR).

The protein belongs to the pantothenate synthetase family. Homodimer.

The protein localises to the cytoplasm. The catalysed reaction is (R)-pantoate + beta-alanine + ATP = (R)-pantothenate + AMP + diphosphate + H(+). The protein operates within cofactor biosynthesis; (R)-pantothenate biosynthesis; (R)-pantothenate from (R)-pantoate and beta-alanine: step 1/1. Functionally, catalyzes the condensation of pantoate with beta-alanine in an ATP-dependent reaction via a pantoyl-adenylate intermediate. This Clostridium botulinum (strain ATCC 19397 / Type A) protein is Pantothenate synthetase.